The chain runs to 147 residues: Myosin regulatory light chain (147 aa).

Position 1 is an N-acetylthreonine (Thr-1). EF-hand domains lie at 2 to 37 (ASAD…LGKN), 73 to 108 (EQSK…LGDA), and 109 to 144 (LTSS…GYPL). Residues Asp-15, Asp-17, Asp-19, Lys-21, Glu-26, Asp-86, Asn-90, Thr-92, and Glu-97 each contribute to the Ca(2+) site.

The protein is Myosin regulatory light chain of Physarum polycephalum (Slime mold).